The chain runs to 791 residues: RAS guanyl-releasing protein 1 (791 aa).

In terms of domain architecture, N-terminal Ras-GEF spans 49-172; the sequence is LGKLSKGASL…RLIDTAQINS (124 aa). The segment at 53-106 is ras exchanger motif region; required for transforming activity; that stretch reads SKGASLDELIQMCIQAFDLDGNMGQNNELLQIMLTMHGFLIPSTELLIKLRTLY. The 232-residue stretch at 201 to 432 folds into the Ras-GEF domain; sequence EPQELAEHLT…YELSYAREPR (232 aa). EF-hand domains follow at residues 466–501 and 502–528; these read HVQRMVDSVFKNYDLDQDGYISQEEFEKIAASFPFS and FCVMDKDREGLISRQEITAYFMRASSI. Residues Asp-479, Asp-481, Asp-483, Tyr-485, Glu-490, Asp-506, Asp-508, Glu-510, and Glu-517 each coordinate Ca(2+). Residues 537–587 form a Phorbol-ester/DAG-type zinc finger; that stretch reads LHNFQETTYLRPTFCDNCAGFLWGVIKQGYRCKDCGMNCHKQCKELVVFEC. Residues 671–715 form a disordered region; sequence TQTENETQSLCLQVPSPPRSRTPDLTSHLPISPMPSPCPSPVPTR. The span at 672-681 shows a compositional bias: polar residues; the sequence is QTENETQSLC. Over residues 702-712 the composition is skewed to pro residues; that stretch reads SPMPSPCPSPV. A coiled-coil region spans residues 728–783; it reads IRKARAELRGGKAGIQELEKEKVFLKEENTALKIQLKDAHRRVETLRAELRKYVLD.

The protein belongs to the RASGRP family.

The protein resides in the cytoplasm. It localises to the cytosol. Its subcellular location is the cell membrane. The protein localises to the golgi apparatus membrane. It is found in the endoplasmic reticulum membrane. With respect to regulation, regulated by F-actin polymerization and probably by calcium. Functions as a diacylglycerol (DAG)-regulated nucleotide exchange factor specifically activating Ras through the exchange of bound GDP for GTP. The polypeptide is RAS guanyl-releasing protein 1 (rasgrp1) (Xenopus laevis (African clawed frog)).